A 123-amino-acid chain; its full sequence is Small ribosomal subunit protein uS12 (123 aa).

Asp-89 is modified (3-methylthioaspartic acid).

It belongs to the universal ribosomal protein uS12 family. In terms of assembly, part of the 30S ribosomal subunit. Contacts proteins S8 and S17. May interact with IF1 in the 30S initiation complex.

Its function is as follows. With S4 and S5 plays an important role in translational accuracy. Interacts with and stabilizes bases of the 16S rRNA that are involved in tRNA selection in the A site and with the mRNA backbone. Located at the interface of the 30S and 50S subunits, it traverses the body of the 30S subunit contacting proteins on the other side and probably holding the rRNA structure together. The combined cluster of proteins S8, S12 and S17 appears to hold together the shoulder and platform of the 30S subunit. The chain is Small ribosomal subunit protein uS12 from Brucella abortus (strain S19).